Consider the following 385-residue polypeptide: Chaperone protein DnaJ (385 aa).

In terms of domain architecture, J spans 5–70 (DFYEVLGVSR…QKKAAYDQYG (66 aa)). The CR-type zinc finger occupies 137 to 214 (GVSKEIEVPT…CHGQGRKQKT (78 aa)). Zn(2+)-binding residues include cysteine 150, cysteine 153, cysteine 167, cysteine 170, cysteine 189, cysteine 192, cysteine 202, and cysteine 205. CXXCXGXG motif repeat units lie at residues 150–157 (CDTCDGSG), 167–174 (CGTCHGHG), 189–196 (CPTCHGKG), and 202–209 (CNECHGQG).

This sequence belongs to the DnaJ family. Homodimer. Requires Zn(2+) as cofactor.

The protein resides in the cytoplasm. Functionally, participates actively in the response to hyperosmotic and heat shock by preventing the aggregation of stress-denatured proteins and by disaggregating proteins, also in an autonomous, DnaK-independent fashion. Unfolded proteins bind initially to DnaJ; upon interaction with the DnaJ-bound protein, DnaK hydrolyzes its bound ATP, resulting in the formation of a stable complex. GrpE releases ADP from DnaK; ATP binding to DnaK triggers the release of the substrate protein, thus completing the reaction cycle. Several rounds of ATP-dependent interactions between DnaJ, DnaK and GrpE are required for fully efficient folding. Also involved, together with DnaK and GrpE, in the DNA replication of plasmids through activation of initiation proteins. The sequence is that of Chaperone protein DnaJ from Vibrio harveyi (Beneckea harveyi).